Reading from the N-terminus, the 156-residue chain is Small ribosomal subunit protein uS7c (156 aa).

Belongs to the universal ribosomal protein uS7 family. Part of the 30S ribosomal subunit.

It is found in the plastid. The protein localises to the chloroplast. One of the primary rRNA binding proteins, it binds directly to 16S rRNA where it nucleates assembly of the head domain of the 30S subunit. The protein is Small ribosomal subunit protein uS7c (rps7) of Porphyra purpurea (Red seaweed).